A 349-amino-acid chain; its full sequence is DNA replication and repair protein RecF (349 aa).

An ATP-binding site is contributed by 30-37 (GKNGSGKT).

The protein belongs to the RecF family.

It localises to the cytoplasm. Its function is as follows. The RecF protein is involved in DNA metabolism; it is required for DNA replication and normal SOS inducibility. RecF binds preferentially to single-stranded, linear DNA. It also seems to bind ATP. This Francisella tularensis subsp. mediasiatica (strain FSC147) protein is DNA replication and repair protein RecF.